Here is a 457-residue protein sequence, read N- to C-terminus: Probable ECA polymerase (457 aa).

11 consecutive transmembrane segments (helical) span residues 3–23 (LLQF…ILTL), 41–61 (MLFL…VFGF), 65–85 (VVPA…YAIY), 118–138 (IMAL…GFLL), 154–174 (GVAL…VYFL), 181–201 (WLLF…IVGG), 206–226 (IIIA…ITLW), 227–247 (MLAL…LKRY), 340–360 (LVVM…GLII), 377–397 (YKAA…IVLA), and 408–428 (VVFF…LYWL).

This sequence belongs to the WzyE family. In terms of assembly, probably part of a complex composed of WzxE, WzyE and WzzE.

The protein localises to the cell inner membrane. The protein operates within bacterial outer membrane biogenesis; enterobacterial common antigen biosynthesis. Functionally, probably involved in the polymerization of enterobacterial common antigen (ECA) trisaccharide repeat units. This chain is Probable ECA polymerase, found in Erwinia tasmaniensis (strain DSM 17950 / CFBP 7177 / CIP 109463 / NCPPB 4357 / Et1/99).